Here is a 643-residue protein sequence, read N- to C-terminus: Versicolorin B synthase (643 aa).

The propeptide occupies 1 to 41 (MGRNWFQVTAMAVVPVVGIMAAVNPTILSSAASSLPSLGAM). FAD-binding positions include 84 to 85 (TA) and 105 to 106 (EA). Residue Asn-116 is glycosylated (N-linked (GlcNAc...) asparagine). Residue 171–174 (GAML) coordinates FAD. 2 N-linked (GlcNAc...) asparagine glycosylation sites follow: Asn-221 and Asn-507. FAD-binding positions include Ala-613 and 624 to 625 (PM).

This sequence belongs to the GMC oxidoreductase family. In terms of assembly, homodimer. FAD is required as a cofactor. N-glycosylated.

Its subcellular location is the cytoplasm. It localises to the cytosol. The enzyme catalyses (2S-3S)-versiconal hemiacetal = versicolorin B + H2O. It carries out the reaction (S)-5'-oxoaverantin + H(+) = (1'S,5'S)-averufin + H2O. The protein operates within mycotoxin biosynthesis; aflatoxin biosynthesis. Functionally, dual cyclase; part of the gene cluster that mediates the biosynthesis of aflatoxins, a group of polyketide-derived furanocoumarins, and part of the most toxic and carcinogenic compounds among the known mycotoxins. The four major aflatoxins produced by A.parasiticus are aflatoxin B1 (AFB1), aflatoxin B2 (AFB2), aflatoxin G1 (AFG1) and aflatoxin G2 (AFG2). Aflk plays a dual role within the aflatoxin pathway, as a 5'-oxoaverantin cyclase that mediates conversion of 5'-oxoaverantin (OAVN) to averufin (AVF), as well as a versicolorin B synthase that converts versiconal (VAL) to versicolorin B (VERB) by closing the bisfuran ring of aflatoxin which is required for DNA-binding, thus giving to aflatoxin its activity as a mutagen. The biosynthesis of aflatoxins begins with the norsolorinic acid synthase aflC that combines a hexanoyl starter unit produced by the fatty acid synthase aflA/aflB and 7 malonyl-CoA extender units to synthesize the precursor NOR. The second step is the conversion of NOR to averantin and requires the norsolorinic acid ketoreductase aflD, which catalyzes the dehydration of norsolorinic acid to form (1'S)-averantin. The norsolorinic acid reductases aflE and aflF may also play a role in the conversion of NOR to AVN. The cytochrome P450 monooxygenase aflG then catalyzes the hydroxylation of AVN to 5'hydroxyaverantin (HAVN). The next step is performed by the 5'-hydroxyaverantin dehydrogenase aflH that transforms HAVN to 5'-oxoaverantin (OAVN) which is further converted to averufin (AVF) by aflK that plays a dual role in the pathway, as a 5'-oxoaverantin cyclase that mediates conversion of 5'-oxoaverantin, as well as a versicolorin B synthase in a later step in the pathway. The averufin oxidase aflI catalyzes the conversion of AVF to versiconal hemiacetal acetate (VHA). VHA is then the substrate for the versiconal hemiacetal acetate esterase aflJ to yield versiconal (VAL). Versicolorin B synthase aflK then converts VAL to versicolorin B (VERB) by closing the bisfuran ring of aflatoxin which is required for DNA-binding, thus giving to aflatoxin its activity as a mutagen. Then, the activity of the versicolorin B desaturase aflL leads to versicolorin A (VERA). A branch point starts from VERB since it can also be converted to dihydrodemethylsterigmatocystin (DMDHST), probably also by aflL, VERA being a precursor for aflatoxins B1 and G1, and DMDHST for aflatoxins B2 and G2. Next, the versicolorin reductase aflM and the cytochrome P450 monooxygenase aflN are involved in conversion of VERA to demethylsterigmatocystin (DMST). AflX and aflY seem also involved in this step, through probable aflX-mediated epoxide ring-opening step following versicolorin A oxidation and aflY-mediated Baeyer-Villiger oxidation required for the formation of the xanthone ring. The methyltransferase aflO then leads to the modification of DMST to sterigmatocystin (ST), and of DMDHST to dihydrosterigmatocystin (DHST). Both ST and DHST are then substrates of the O-methyltransferase aflP to yield O-methylsterigmatocystin (OMST) and dihydro-O-methylsterigmatocystin (DHOMST), respectively. Finally OMST is converted to aflatoxins B1 and G1, and DHOMST to aflatoxins B2 and G2, via the action of several enzymes including O-methylsterigmatocystin oxidoreductase aflQ, the cytochrome P450 monooxygenase aflU, but also the NADH-dependent flavin oxidoreductase nadA which is specifically required for the synthesis of AFG1. The sequence is that of Versicolorin B synthase from Aspergillus parasiticus (strain ATCC 56775 / NRRL 5862 / SRRC 143 / SU-1).